Here is a 303-residue protein sequence, read N- to C-terminus: Trans-enoyl reductase tazE (303 aa).

The tract at residues 1–26 (MTAEHDAAILPKPGGPLAVGKRATPE) is disordered. 44–49 (CDYYQR) is an NADP(+) binding site. Residue 136–143 (LAVLTALT) participates in substrate binding. Residues 170-173 (SSSV), 193-196 (SPKH), tyrosine 211, and 246-247 (LD) each bind NADP(+). 265–269 (VLPEC) contributes to the substrate binding site.

This sequence belongs to the zinc-containing alcohol dehydrogenase family.

It functions in the pathway secondary metabolite biosynthesis. In terms of biological role, trans-enoyl reductase; part of the gene cluster that mediates the biosynthesis of azaterrilone A and other azaphilones, a class of fungal metabolites characterized by a highly oxygenated pyrano-quinone bicyclic core and exhibiting a broad range of bioactivities. The first step of the pathway begins with the non-reducing polyketide synthase tazA that assembles one acetyl-CoA starter unit, five malonyl-CoA units, and catalyzes a series of Claisen condensations, methylation, PT-mediated cyclization, and finally releases the first hexaketide precursor through the R-domain. The tazA product then undergoes reduction on its terminal ketone and the following pyran-ring formation by yet undetermined enzyme(s). Dehydration and enoyl reduction, possibly involving the trans-enoyl reductase tazE leads to the next intermediate. TazD is predicted as an acetyltransferase and might catalyze the acetylation steps leading to the synthesis of azaterrilone A. Azaterrilone A is not the final product of the taz pathway and both the highly reducing polyketide synthase tazB and the dual enzyme tazHJ catalyze late steps of the pathway, leading to the production of the 2 final stereoisomers that contain additional polyketide modification whose structures have still to be determined. The protein is Trans-enoyl reductase tazE of Aspergillus terreus (strain NIH 2624 / FGSC A1156).